The sequence spans 21 residues: Trypsin (21 aa).

The protein belongs to the peptidase S1 family.

It is found in the secreted. The protein resides in the extracellular space. The enzyme catalyses Preferential cleavage: Arg-|-Xaa, Lys-|-Xaa.. The sequence is that of Trypsin from Apis mellifera scutellata (Africanized honey bee).